Here is a 122-residue protein sequence, read N- to C-terminus: Secreted RxLR effector protein RXLR-C251 (122 aa).

The first 24 residues, 1–24, serve as a signal peptide directing secretion; it reads MRFFYKLALMTTVASLACSDTALA. Positions 48-51 match the RxLR motif; the sequence is RSLR.

The protein belongs to the RxLR effector family.

It is found in the secreted. It localises to the host cytoplasm. The protein resides in the host nucleus. Its function is as follows. Secreted effector that does not suppress pattern-triggered immunity (PTI) in plant host. This Plasmopara halstedii (Downy mildew of sunflower) protein is Secreted RxLR effector protein RXLR-C251.